The following is a 138-amino-acid chain: Protein FAM136A (138 aa).

The residue at position 2 (Ala-2) is an N-acetylalanine. Residues Thr-124 and Thr-126 each carry the phosphothreonine modification.

It belongs to the FAM136 family.

This chain is Protein FAM136A (Fam136a), found in Rattus norvegicus (Rat).